The chain runs to 269 residues: Phycobilisome 37.5 kDa linker polypeptide, phycocyanin-associated, rod (269 aa).

The PBS-linker domain occupies 2 to 177 (TSSTAARQLG…IYRGYANSDR (176 aa)). Residues 217-269 (GQLYRVRVIQADRGRTTQIRRSIQEYLVSYDQLSPTLQRLNQRGSRVVNISPA) form the CpcD-like domain.

This sequence belongs to the phycobilisome linker protein family.

It localises to the cellular thylakoid membrane. In terms of biological role, rod linker protein, associated with phycocyanin. Linker polypeptides determine the state of aggregation and the location of the disk-shaped phycobiliprotein units within the phycobilisome and modulate their spectroscopic properties in order to mediate a directed and optimal energy transfer. The protein is Phycobilisome 37.5 kDa linker polypeptide, phycocyanin-associated, rod (cpcH2) of Microchaete diplosiphon (Fremyella diplosiphon).